The sequence spans 26 residues: Potassium channel toxin alpha-KTx6 OcyKTx1 (26 aa).

Cysteine 3 and cysteine 24 are oxidised to a cystine.

The protein belongs to the short scorpion toxin superfamily. Potassium channel inhibitor family. Alpha-KTx 06 subfamily. As to expression, expressed by the venom gland.

It localises to the secreted. Blocks voltage-gated potassium channels. This is Potassium channel toxin alpha-KTx6 OcyKTx1 from Opisthacanthus cayaporum (South American scorpion).